A 480-amino-acid polypeptide reads, in one-letter code: Bifunctional protein HldE (480 aa).

The segment at 1–316 is ribokinase; the sequence is MNMHDFSKTK…EQLNASMRHQ (316 aa). 192 to 195 serves as a coordination point for ATP; it reads NQGE. The active site involves Asp261. Residues 342–480 are cytidylyltransferase; the sequence is FTNGCFDLLH…EAEIKEGAAQ (139 aa).

The protein in the N-terminal section; belongs to the carbohydrate kinase PfkB family. This sequence in the C-terminal section; belongs to the cytidylyltransferase family. Homodimer.

The enzyme catalyses D-glycero-beta-D-manno-heptose 7-phosphate + ATP = D-glycero-beta-D-manno-heptose 1,7-bisphosphate + ADP + H(+). It catalyses the reaction D-glycero-beta-D-manno-heptose 1-phosphate + ATP + H(+) = ADP-D-glycero-beta-D-manno-heptose + diphosphate. The protein operates within nucleotide-sugar biosynthesis; ADP-L-glycero-beta-D-manno-heptose biosynthesis; ADP-L-glycero-beta-D-manno-heptose from D-glycero-beta-D-manno-heptose 7-phosphate: step 1/4. It participates in nucleotide-sugar biosynthesis; ADP-L-glycero-beta-D-manno-heptose biosynthesis; ADP-L-glycero-beta-D-manno-heptose from D-glycero-beta-D-manno-heptose 7-phosphate: step 3/4. Catalyzes the phosphorylation of D-glycero-D-manno-heptose 7-phosphate at the C-1 position to selectively form D-glycero-beta-D-manno-heptose-1,7-bisphosphate. In terms of biological role, catalyzes the ADP transfer from ATP to D-glycero-beta-D-manno-heptose 1-phosphate, yielding ADP-D-glycero-beta-D-manno-heptose. The polypeptide is Bifunctional protein HldE (Hydrogenovibrio crunogenus (strain DSM 25203 / XCL-2) (Thiomicrospira crunogena)).